A 146-amino-acid polypeptide reads, in one-letter code: Probable flagellum biosynthesis repressor protein FlbT 1 (146 aa).

This sequence belongs to the FlbT family.

Has a post-transcriptional repressor function in flagellum biogenesis. Associates with the 5'-UTR of fljK mRNA and promotes its degradation. This is Probable flagellum biosynthesis repressor protein FlbT 1 from Bradyrhizobium diazoefficiens (strain JCM 10833 / BCRC 13528 / IAM 13628 / NBRC 14792 / USDA 110).